A 269-amino-acid chain; its full sequence is MFDFMTLEKVQERGPLVHNITNIVVANDSANGLLAIGASPIMASAKQEMDELAKMADVLVINIGMLDGELVEAMKIAGRAANFAETQVVLDPVGVGATSYRRKVVQELLAEIQFAAIRGNAGELAAIAGEAWEAKGVDAGVGSADVLAIAEKVAKEWNTVVIISGEVDVISDGTRFAKVANGSALLPRITGSGCLLSAVCGSFIAVQDDVFRASVEACVSYAVASEYAEMELERKLPGSFRPLFLDALASWSVEKTRAKAKILESGEHK.

Met-42 is a substrate binding site. Arg-118 and Ser-164 together coordinate ATP. A substrate-binding site is contributed by Gly-191.

It belongs to the Thz kinase family. Requires Mg(2+) as cofactor.

The catalysed reaction is 5-(2-hydroxyethyl)-4-methylthiazole + ATP = 4-methyl-5-(2-phosphooxyethyl)-thiazole + ADP + H(+). Its pathway is cofactor biosynthesis; thiamine diphosphate biosynthesis; 4-methyl-5-(2-phosphoethyl)-thiazole from 5-(2-hydroxyethyl)-4-methylthiazole: step 1/1. Catalyzes the phosphorylation of the hydroxyl group of 4-methyl-5-beta-hydroxyethylthiazole (THZ). The chain is Hydroxyethylthiazole kinase from Listeria welshimeri serovar 6b (strain ATCC 35897 / DSM 20650 / CCUG 15529 / CIP 8149 / NCTC 11857 / SLCC 5334 / V8).